The sequence spans 115 residues: Type 3 secretion system chaperone PscG (115 aa).

This sequence belongs to the YscG family. As to quaternary structure, forms a stable heterotrimeric complex with PscE and PscF/SctF in the cytoplasm. Co-stabilized by PscE.

It localises to the cytoplasm. Functionally, chaperone of the type III secretion system (T3SS), also called injectisome, which is used to inject bacterial effector proteins into eukaryotic host cells, facilitating the establishment and dissemination of infection. Along with PscE, prevents premature polymerization of the PscF/SctF needle protein within the cytoplasm. Required for type III secretion needle assembly. Also required for cytotoxicity by influencing PscF/SctF levels. This Pseudomonas aeruginosa (strain ATCC 15692 / DSM 22644 / CIP 104116 / JCM 14847 / LMG 12228 / 1C / PRS 101 / PAO1) protein is Type 3 secretion system chaperone PscG (pscG).